The primary structure comprises 474 residues: Iroquois-class homeodomain protein irx-5 (474 aa).

The homeobox; TALE-type DNA-binding region spans Asp109 to Asn171. Disordered stretches follow at residues Thr174–Gly222, Glu252–Leu294, and Ser453–Ile474. The span at Glu182–Asp199 shows a compositional bias: acidic residues. Over residues Pro263 to Gln273 the composition is skewed to pro residues.

Belongs to the TALE/IRO homeobox family. As to expression, early in gastrulation, expressed in cells beneath the blastopore lip. Subsequently expressed in the neural plate in overlapping patterns with other irx members, which all share an anterior border of expression. At the time of neural tube closure (stage 19) in regions of the midbrain, hindbrain, neural tube and optic vesicle, where expression continues during tailbud stages. In stage 34, expressed throughout the eye retina. Does not appear to be expressed in the developing heart or pronephros.

It localises to the nucleus. In terms of biological role, acts partially redundantly with other irx members in neural patterning. Required for formation of the posterior forebrain, midbrain, hindbrain, and to a lesser extent, spinal cord. Patterns the neuroectoderm in both the anterior/posterior and dorsal/ventral axes. Does not appear to play a role in pronephros kidney development. Involved in craniofacial and gonadal development. Modulates the migration of progenitor cell populations in branchial arches and gonads by repressing CXCL12. This is Iroquois-class homeodomain protein irx-5 (irx5) from Xenopus laevis (African clawed frog).